Consider the following 70-residue polypeptide: Aurein-3.1 (70 aa).

A signal peptide spans 1–22 (MAFLKKSLFLVLFLGLVSLSIC). A propeptide spanning residues 23-49 (EKEKRQNEEDEDENEAANHEEGSEEKR) is cleaved from the precursor. Positions 27–48 (RQNEEDEDENEAANHEEGSEEK) are disordered. Residues 38–48 (AANHEEGSEEK) show a composition bias toward basic and acidic residues. An Isoleucine amide modification is found at isoleucine 66.

Expressed by the skin dorsal glands.

Its subcellular location is the secreted. It localises to the target cell membrane. Amphipathic alpha-helical antimicrobial peptide with weak to potent activity against Gram-positive bacteria, and no activity against Gram-negative bacteria. Probably acts by disturbing membrane functions with its amphipathic structure. Shows anticancer activity. This is Aurein-3.1 from Ranoidea aurea (Green and golden bell frog).